Consider the following 578-residue polypeptide: Zinc finger protein 248 (578 aa).

The 71-residue stretch at 8 to 78 (VSFKDVCVDF…LEKGFPSQDP (71 aa)) folds into the KRAB domain. The C2H2-type 1; degenerate zinc finger occupies 239–263 (TVCKYNECGRTFIESLKLNISQRPH). A Glycyl lysine isopeptide (Lys-Gly) (interchain with G-Cter in SUMO2) cross-link involves residue Lys340. 7 C2H2-type zinc fingers span residues 379–401 (FECG…QRTH), 407–429 (YECT…QRTH), 435–457 (YECK…QRTH), 463–485 (YECN…QRTH), 491–513 (FICN…QRTH), 519–542 (YKCN…RTHT), and 547–569 (YECN…QRIH).

This sequence belongs to the krueppel C2H2-type zinc-finger protein family.

It localises to the nucleus. Functionally, may be involved in transcriptional regulation. In Pongo abelii (Sumatran orangutan), this protein is Zinc finger protein 248 (ZNF248).